We begin with the raw amino-acid sequence, 273 residues long: Peptidyl-prolyl cis-trans isomerase E (273 aa).

The RRM domain occupies 1–48 (MPMDYQTEKHRGFAFVEFEEVEDAMSAIDNMNESEIFGRTIRVNVARP). Positions 77 to 103 (RKLDEPDIVNPSDTSENVEDLSDEEMR) are disordered. In terms of domain architecture, PPIase cyclophilin-type spans 115 to 271 (FFDIRIGNGD…EPVIISRCGE (157 aa)).

The protein belongs to the cyclophilin-type PPIase family. PPIase E subfamily.

Its subcellular location is the cytoplasm. It catalyses the reaction [protein]-peptidylproline (omega=180) = [protein]-peptidylproline (omega=0). Its activity is regulated as follows. Binds cyclosporin A (CsA). CsA mediates some of its effects via an inhibitory action on PPIase. Its function is as follows. PPIases accelerate the folding of proteins. It catalyzes the cis-trans isomerization of proline imidic peptide bonds in oligopeptides. This Schistosoma mansoni (Blood fluke) protein is Peptidyl-prolyl cis-trans isomerase E.